We begin with the raw amino-acid sequence, 378 residues long: Protein RecA (378 aa).

66-73 provides a ligand contact to ATP; it reads GPESSGKT. Residues 333 to 378 form a disordered region; sequence PDAAKAEAATDAAAAADTAGTDDAAKSVPAPASKTAKATKATAVKS. Over residues 338–378 the composition is skewed to low complexity; it reads AEAATDAAAAADTAGTDDAAKSVPAPASKTAKATKATAVKS.

Belongs to the RecA family.

It localises to the cytoplasm. Can catalyze the hydrolysis of ATP in the presence of single-stranded DNA, the ATP-dependent uptake of single-stranded DNA by duplex DNA, and the ATP-dependent hybridization of homologous single-stranded DNAs. It interacts with LexA causing its activation and leading to its autocatalytic cleavage. The sequence is that of Protein RecA from Streptomyces venezuelae (strain ATCC 10712 / CBS 650.69 / DSM 40230 / JCM 4526 / NBRC 13096 / PD 04745).